We begin with the raw amino-acid sequence, 1221 residues long: Reverse gyrase subunit B (1221 aa).

The segment at 56–97 (NEPVAIFGSSCVLCGGDCSSVRLTSRIGICERCLPVDTETLR) adopts an RG N-terminal-type zinc-finger fold. Residues Cys-66, Cys-69, Cys-85, and Cys-88 each coordinate Zn(2+). Residues Gln-161 and 178 to 185 (APTGTGKT) contribute to the ATP site. One can recognise a Helicase ATP-binding domain in the interval 165 to 400 (TRRLVKGCSF…AVVRELFDFE (236 aa)). The DEAD box motif lies at 284–287 (DDVD). Residues 424-600 (AVERIVRKAG…PLSLNTLMKL (177 aa)) form the Helicase C-terminal domain. In terms of domain architecture, Toprim spans 779–935 (SALMIVESPN…QVYRTEFHEV (157 aa)). Position 785 (Glu-785) interacts with Mg(2+). An RG C-terminal-type zinc finger spans residues 856-882 (LGRCSECGEQVVGSEECPNCGGEVELK). 4 residues coordinate Zn(2+): Cys-859, Cys-862, Cys-872, and Cys-875. Asp-904 contacts Mg(2+). The region spanning 953 to 1221 (DAGRVSAQIL…MLHLAGVSGR (269 aa)) is the Topo IA-type catalytic domain.

This sequence in the C-terminal section; belongs to the type IA topoisomerase family. The protein in the N-terminal section; belongs to the DEAD box helicase family. DDVD subfamily. As to quaternary structure, heterodimer of an RgyrA and RgyrB subunit. The topoisomerase domain is shared between the two subunits. Requires Zn(2+) as cofactor. Mg(2+) is required as a cofactor. In terms of processing, the N-terminus is partially blocked.

The protein resides in the cytoplasm. It carries out the reaction ATP + H2O = ADP + phosphate + H(+). Its function is as follows. Modifies the topological state of DNA by introducing positive supercoils in an ATP-dependent process; dATP also allows positive supercoiling. Increases the linking number in steps of +1. Only this subunit binds ATP, it does so in a DNA- and RgyA-independent manner. Hydrolyzes ATP only in the presence of DNA. The RgyA subunit transiently cleaves a single DNA strand and remains covalently bound to the 5' DNA end probably through a tyrosine residue. It changes linking number in steps of one, and nicks DNA preferentially at 5'-CNNN | 3'-sites with a strong preference for 4 pyrimidine residues. There are about 1000 heterodimers per cell. May be involved in rewinding the DNA strands in the regions of the chromosome that have opened up to allow transcription or replication. In terms of biological role, this subunit expressed in E.coli only has DNA-dependent ATPase activity at 80 degrees Celsius. Reverse gyrase activity is reconstituted after incubation at 80 degrees Celsius for 5 minutes, positive supercoiling requires ATP and Mg(2+). In the presence of ATP it binds and nicks substrate but does not make closed product. In Methanopyrus kandleri (strain AV19 / DSM 6324 / JCM 9639 / NBRC 100938), this protein is Reverse gyrase subunit B.